A 59-amino-acid chain; its full sequence is Potassium channel toxin alpha-KTx 4.5 (59 aa).

A signal peptide spans 1-22; that stretch reads MKAFYGVLIIFILISMLDLSQQ. Cystine bridges form between Cys29-Cys50, Cys35-Cys55, and Cys39-Cys57. The segment at 48 to 55 is interaction with Ca(2+)-activated K(+) channels; the sequence is GKCMNGKC.

In terms of tissue distribution, expressed by the venom gland.

The protein localises to the secreted. In terms of biological role, inhibits with low potency Kv1.1/KCNA1, Kv1.2/KCNA2, Kv1.3/KCNA3 and Kv11.1/KCNH2/ERG1 voltage-gated potassium channels. This Tityus costatus (Brazilian scorpion) protein is Potassium channel toxin alpha-KTx 4.5.